The sequence spans 268 residues: Phosphate import ATP-binding protein PstB 2 (268 aa).

Residues 22–263 (MALTGVNFYY…PKVKRTEDYI (242 aa)) form the ABC transporter domain. 54 to 61 (GPSGCGKS) provides a ligand contact to ATP.

It belongs to the ABC transporter superfamily. Phosphate importer (TC 3.A.1.7) family. The complex is composed of two ATP-binding proteins (PstB), two transmembrane proteins (PstC and PstA) and a solute-binding protein (PstS).

Its subcellular location is the cell inner membrane. The enzyme catalyses phosphate(out) + ATP + H2O = ADP + 2 phosphate(in) + H(+). Its function is as follows. Part of the ABC transporter complex PstSACB involved in phosphate import. Responsible for energy coupling to the transport system. The sequence is that of Phosphate import ATP-binding protein PstB 2 from Rhizobium johnstonii (strain DSM 114642 / LMG 32736 / 3841) (Rhizobium leguminosarum bv. viciae).